The chain runs to 257 residues: MSDVVVVIPARYGASRLPGKPLLDLHGEPMIARVWQRACKSDATRVVIATDDERIEAAMQPYGADVMLTAPDHPSGTDRLAEVAARLELDADTIVVNVQGDEPLLPPALIDQVVRRLADDTTASIATLAEPIGDVETLFNPNVVKVVRDLHGRALYFSRAPVPWDREHFATRPDCLATDAWLRHIGLYAYRAGFLAAYVDWLPSPLEQLEQLEQLRAMHHGHRIQVALAAEAHPAGVDTEADLARVRRLIAEGEGAA.

It belongs to the KdsB family.

Its subcellular location is the cytoplasm. It catalyses the reaction 3-deoxy-alpha-D-manno-oct-2-ulosonate + CTP = CMP-3-deoxy-beta-D-manno-octulosonate + diphosphate. It participates in nucleotide-sugar biosynthesis; CMP-3-deoxy-D-manno-octulosonate biosynthesis; CMP-3-deoxy-D-manno-octulosonate from 3-deoxy-D-manno-octulosonate and CTP: step 1/1. The protein operates within bacterial outer membrane biogenesis; lipopolysaccharide biosynthesis. Activates KDO (a required 8-carbon sugar) for incorporation into bacterial lipopolysaccharide in Gram-negative bacteria. The chain is 3-deoxy-manno-octulosonate cytidylyltransferase from Chromohalobacter salexigens (strain ATCC BAA-138 / DSM 3043 / CIP 106854 / NCIMB 13768 / 1H11).